We begin with the raw amino-acid sequence, 488 residues long: MTFNNKTIEELHNLLVSKEISATELTQATLENIKSREEALNSFVTIAEEQALVQAKAIDEAGIDADNVLSGIPLAVKDNISTDGILTTAASKMLYNYEPIFDATAVANAKTKGMIVVGKTNMDEFAMGGSGETSHYGATKNAWDHSKVPGGSSSGSAAAVASGQVRLSLGSDTGGSIRQPAAFNGIVGLKPTYGTVSRFGLIAFGSSLDQIGPFAPTVKENALLLNAIASEDAKDSTSAPVRIADFTSKIGQDIKGMKIALPKEYLGEGINPEVKETILNAAKHFEKLGAIVEEVSLPHSKYGVAVYYIIASSEASSNLQRFDGIRYGYRAEDATNLDEIYVNSRSQGFGEEVKRRIMLGTFSLSSGYYDAYYKKAGQVRTLIIQDFEKVFADYDLILGPTAPSVAYDLDSLNHDPVAMYLADLLTIPVNLAGLPGISIPAGFSQGLPVGLQLIGPKYSEETIYQAAAAFEATTDYHKQQPVIFGGDN.

Catalysis depends on charge relay system residues K77 and S152. Residue S176 is the Acyl-ester intermediate of the active site.

This sequence belongs to the amidase family. GatA subfamily. In terms of assembly, heterotrimer of A, B and C subunits.

It catalyses the reaction L-glutamyl-tRNA(Gln) + L-glutamine + ATP + H2O = L-glutaminyl-tRNA(Gln) + L-glutamate + ADP + phosphate + H(+). In terms of biological role, allows the formation of correctly charged Gln-tRNA(Gln) through the transamidation of misacylated Glu-tRNA(Gln) in organisms which lack glutaminyl-tRNA synthetase. The reaction takes place in the presence of glutamine and ATP through an activated gamma-phospho-Glu-tRNA(Gln). The protein is Glutamyl-tRNA(Gln) amidotransferase subunit A of Streptococcus pneumoniae serotype 19F (strain G54).